We begin with the raw amino-acid sequence, 142 residues long: Large ribosomal subunit protein uL11 (142 aa).

This sequence belongs to the universal ribosomal protein uL11 family. In terms of assembly, part of the ribosomal stalk of the 50S ribosomal subunit. Interacts with L10 and the large rRNA to form the base of the stalk. L10 forms an elongated spine to which L12 dimers bind in a sequential fashion forming a multimeric L10(L12)X complex. One or more lysine residues are methylated.

In terms of biological role, forms part of the ribosomal stalk which helps the ribosome interact with GTP-bound translation factors. The protein is Large ribosomal subunit protein uL11 of Mycobacterium sp. (strain JLS).